The sequence spans 869 residues: Mismatch repair endonuclease PMS2 (869 aa).

ATP is bound by residues N44, D69, E108, A109, and L110. The Nuclear localization signal signature appears at 585–588 (RRFK).

Belongs to the DNA mismatch repair MutL/HexB family.

The protein resides in the nucleus. The catalysed reaction is ATP + H2O = ADP + phosphate + H(+). Component of the post-replicative DNA mismatch repair system (MMR). Involved in B cell growth by positively regulating B cell proliferation and controlling replication efficiency. Controls cell cycle to prevent re-replication and defects in DNA damage-induced G2 checkpoint. Doesn't seem to counteract or control the immunoglobulin gene conversion (Ig GC) and to contribute to guanine/uracil mismatch repair. Possesses an ATPase activity, but in the absence of gross structural changes, ATP hydrolysis may not be necessary for proficient mismatch repair. This chain is Mismatch repair endonuclease PMS2, found in Gallus gallus (Chicken).